The primary structure comprises 843 residues: Neuroligin-1 (843 aa).

Residues Met1–Ser45 form the signal peptide. The Extracellular portion of the chain corresponds to Gln46–Ser697. Asn109 carries an N-linked (GlcNAc...) (complex) asparagine glycan. Disulfide bonds link Cys117-Cys153 and Cys172-Cys181. N-linked (GlcNAc...) (complex) asparagine glycosylation is found at Asn303 and Asn343. 2 disulfides stabilise this stretch: Cys342–Cys353 and Cys512–Cys546. A glycan (N-linked (GlcNAc...) asparagine) is linked at Asn547. Residues Thr647 to Asp688 form a disordered region. Residues Lys661–Phe670 show a composition bias toward polar residues. 2 O-linked (GalNAc...) serine glycosylation sites follow: Ser683 and Ser686. The helical transmembrane segment at Val698 to Tyr718 threads the bilayer. Over Tyr719–Val843 the chain is Cytoplasmic. The disordered stretch occupies residues Gly822–Val843. Residues Pro831 to Val843 show a composition bias toward basic residues.

It belongs to the type-B carboxylesterase/lipase family. As to quaternary structure, interacts with neurexins NRXN1, NRXN2 and NRXN3. Interaction with neurexins is mediated by heparan sulfate glycan modification on neurexin. Interacts with NLGN3. Interacts (via its C-terminus) with DLG4/PSD-95 (via PDZ domain 3). Interacts with GOPC. Interacts with AIP1 and PDZRN3. Post-translationally, the N-terminus is blocked. Expressed in brain, almost exclusively in neurons, and spinal cord. Detected in pancreas islet beta cells.

It is found in the cell membrane. The protein localises to the postsynaptic density. The protein resides in the synaptic cleft. It localises to the synaptic cell membrane. In terms of biological role, cell surface protein involved in cell-cell-interactions via its interactions with neurexin family members. Plays a role in synapse function and synaptic signal transmission, and probably mediates its effects by recruiting and clustering other synaptic proteins. May promote the initial formation of synapses, but is not essential for this. In vitro, triggers the de novo formation of presynaptic structures. May be involved in specification of excitatory synapses. Required to maintain wakefulness quality and normal synchrony of cerebral cortex activity during wakefulness and sleep. The protein is involved in nervous system development. In Rattus norvegicus (Rat), this protein is Neuroligin-1 (Nlgn1).